Reading from the N-terminus, the 510-residue chain is GMP synthase [glutamine-hydrolyzing] (510 aa).

The Glutamine amidotransferase type-1 domain occupies 5–195 (LVIVVDFGGQ…LYEICKADGD (191 aa)). Cysteine 82 functions as the Nucleophile in the catalytic mechanism. Catalysis depends on residues histidine 169 and glutamate 171. One can recognise a GMPS ATP-PPase domain in the interval 196-385 (WTMENFLEEQ…LEMPEYLVYR (190 aa)). Residue 223–229 (SGGVDSS) coordinates ATP.

In terms of assembly, homodimer.

It catalyses the reaction XMP + L-glutamine + ATP + H2O = GMP + L-glutamate + AMP + diphosphate + 2 H(+). It functions in the pathway purine metabolism; GMP biosynthesis; GMP from XMP (L-Gln route): step 1/1. Its function is as follows. Catalyzes the synthesis of GMP from XMP. This is GMP synthase [glutamine-hydrolyzing] from Finegoldia magna (strain ATCC 29328 / DSM 20472 / WAL 2508) (Peptostreptococcus magnus).